A 175-amino-acid polypeptide reads, in one-letter code: uncharacterized protein (175 aa).

2 disordered regions span residues 68-112 and 153-175; these read NKNN…DQPY and PEKA…KLTT. The span at 94–105 shows a compositional bias: low complexity; that stretch reads DEQPMMPYQQPP.

This sequence belongs to the asfivirus H171R family.

The protein resides in the virion. This is an uncharacterized protein from African swine fever virus (isolate Tick/Malawi/Lil 20-1/1983) (ASFV).